Consider the following 334-residue polypeptide: S-adenosylmethionine decarboxylase proenzyme (334 aa).

Phe7 provides a ligand contact to substrate. Active-site residues include Glu8 and Glu11. Substrate is bound at residue Glu67. The active-site Schiff-base intermediate with substrate; via pyruvic acid is Ser68. Ser68 is subject to Pyruvic acid (Ser); by autocatalysis. The Proton donor; for catalytic activity role is filled by Cys82. Phe223 serves as a coordination point for substrate. Catalysis depends on proton acceptor; for processing activity residues Ser229 and His243. Glu247 provides a ligand contact to substrate. Ser298 is subject to Phosphoserine.

This sequence belongs to the eukaryotic AdoMetDC family. In terms of assembly, heterotetramer of two alpha and two beta chains. Requires pyruvate as cofactor. In terms of processing, is synthesized initially as an inactive proenzyme. Formation of the active enzyme involves a self-maturation process in which the active site pyruvoyl group is generated from an internal serine residue via an autocatalytic post-translational modification. Two non-identical subunits are generated from the proenzyme in this reaction, and the pyruvate is formed at the N-terminus of the alpha chain, which is derived from the carboxyl end of the proenzyme. The post-translation cleavage follows an unusual pathway, termed non-hydrolytic serinolysis, in which the side chain hydroxyl group of the serine supplies its oxygen atom to form the C-terminus of the beta chain, while the remainder of the serine residue undergoes an oxidative deamination to produce ammonia and the pyruvoyl group blocking the N-terminus of the alpha chain.

The enzyme catalyses S-adenosyl-L-methionine + H(+) = S-adenosyl 3-(methylsulfanyl)propylamine + CO2. Its pathway is amine and polyamine biosynthesis; S-adenosylmethioninamine biosynthesis; S-adenosylmethioninamine from S-adenosyl-L-methionine: step 1/1. In terms of biological role, essential for biosynthesis of the polyamines spermidine and spermine. Promotes maintenance and self-renewal of embryonic stem cells, by maintaining spermine levels. The sequence is that of S-adenosylmethionine decarboxylase proenzyme (AMD1) from Bos taurus (Bovine).